A 119-amino-acid polypeptide reads, in one-letter code: Large ribosomal subunit protein uL22 (119 aa).

The protein belongs to the universal ribosomal protein uL22 family. In terms of assembly, part of the 50S ribosomal subunit.

Functionally, this protein binds specifically to 23S rRNA; its binding is stimulated by other ribosomal proteins, e.g. L4, L17, and L20. It is important during the early stages of 50S assembly. It makes multiple contacts with different domains of the 23S rRNA in the assembled 50S subunit and ribosome. The globular domain of the protein is located near the polypeptide exit tunnel on the outside of the subunit, while an extended beta-hairpin is found that lines the wall of the exit tunnel in the center of the 70S ribosome. The protein is Large ribosomal subunit protein uL22 of Rickettsia canadensis (strain McKiel).